Reading from the N-terminus, the 446-residue chain is White-opaque regulator 2 (446 aa).

Polar residues predominate over residues M1–T24. The segment at M1–F203 is disordered. The segment covering T30 to S64 has biased composition (low complexity). Residues T67 to A86 are compositionally biased toward polar residues. Low complexity-rich tracts occupy residues S87 to P97 and S104 to S120. Residues N121–V144 are compositionally biased toward polar residues. The segment covering V166 to Q184 has biased composition (pro residues). Low complexity predominate over residues Q185–P195. The zn(2)-C6 fungal-type DNA-binding region spans C305–C332. The tract at residues Q336 to L402 is disordered. Residues N358 to Q369 show a composition bias toward low complexity. Over residues H387–N401 the composition is skewed to polar residues.

It localises to the nucleus. Transcriptional regulator of the switch between 2 heritable states, the white and opaque states. These 2 cell types differ in many characteristics, including cell structure, mating competence, and virulence. Each state is heritable for many generations, and switching between states occurs stochastically, at low frequency. WOR2 is necessary for the stability of the opaque state phenotypic switching from the white to the opaque phase is a necessary step for mating. Plays a role in cell adhesion and pseudohyphal growth. The chain is White-opaque regulator 2 (WOR2) from Candida albicans (strain SC5314 / ATCC MYA-2876) (Yeast).